The sequence spans 224 residues: Cytidylate kinase (224 aa).

12–20 (GPSGAGKGT) is a binding site for ATP.

It belongs to the cytidylate kinase family. Type 1 subfamily.

The protein localises to the cytoplasm. The catalysed reaction is CMP + ATP = CDP + ADP. The enzyme catalyses dCMP + ATP = dCDP + ADP. This is Cytidylate kinase from Aliivibrio salmonicida (strain LFI1238) (Vibrio salmonicida (strain LFI1238)).